Consider the following 384-residue polypeptide: H-2 class I histocompatibility antigen, TLA(B) alpha chain (384 aa).

The first 26 residues, 1–26 (MRMGTPVPGTLLILLAASQGQTQTCP), serve as a signal peptide directing secretion. An alpha-1 region spans residues 27–116 (GSHSLRYFYT…MLDYYNLSQN (90 aa)). Residues 27–314 (GSHSLRYFYT…TSMPNRTTVR (288 aa)) are Extracellular-facing. Residues Asn-63, Asn-112, and Asn-116 are each glycosylated (N-linked (GlcNAc...) asparagine). Residues 117 to 208 (GSHTIQVMYG…ENRKKTQECT (92 aa)) form an alpha-2 region. Cystine bridges form between Cys-127-Cys-190 and Cys-229-Cys-285. Residues 209–300 (DPPKTHVTHH…GLPEPLTLRW (92 aa)) are alpha-3. One can recognise an Ig-like C1-type domain in the interval 211–299 (PKTHVTHHPR…EGLPEPLTLR (89 aa)). The segment at 301-314 (EPPQTSMPNRTTVR) is connecting peptide. N-linked (GlcNAc...) asparagine glycosylation occurs at Asn-309. The chain crosses the membrane as a helical span at residues 315–334 (ALLGAMIILGFMSGSVMMWM). Topologically, residues 335-384 (RKNNGGNGDDNTAAYQNEREHLSLDPRAESEALGVEAGMKDLPSAPPLVS) are cytoplasmic. Over residues 354–364 (EHLSLDPRAES) the composition is skewed to basic and acidic residues. The interval 354-384 (EHLSLDPRAESEALGVEAGMKDLPSAPPLVS) is disordered.

It belongs to the MHC class I family. As to quaternary structure, heterodimer of an alpha chain and a beta chain (beta-2-microglobulin). TL antigens are only expressed on thymocytes, activated T-lymphocytes and on some thymic leukemias.

It localises to the membrane. Involved in the presentation of foreign antigens to the immune system. This is H-2 class I histocompatibility antigen, TLA(B) alpha chain (H2-T3) from Mus musculus (Mouse).